A 127-amino-acid chain; its full sequence is Aspartate 1-decarboxylase (127 aa).

The active-site Schiff-base intermediate with substrate; via pyruvic acid is Ser-25. At Ser-25 the chain carries Pyruvic acid (Ser). Thr-57 provides a ligand contact to substrate. Tyr-58 functions as the Proton donor in the catalytic mechanism. A substrate-binding site is contributed by 73-75 (GAA).

Belongs to the PanD family. In terms of assembly, heterooctamer of four alpha and four beta subunits. Pyruvate serves as cofactor. Post-translationally, is synthesized initially as an inactive proenzyme, which is activated by self-cleavage at a specific serine bond to produce a beta-subunit with a hydroxyl group at its C-terminus and an alpha-subunit with a pyruvoyl group at its N-terminus.

It is found in the cytoplasm. It catalyses the reaction L-aspartate + H(+) = beta-alanine + CO2. It participates in cofactor biosynthesis; (R)-pantothenate biosynthesis; beta-alanine from L-aspartate: step 1/1. Catalyzes the pyruvoyl-dependent decarboxylation of aspartate to produce beta-alanine. In Geobacillus sp. (strain WCH70), this protein is Aspartate 1-decarboxylase.